Here is a 79-residue protein sequence, read N- to C-terminus: MARKPASSQDFETTLAKLENIVAHLENGDLPLEEALKEFEQGVQLAKLGQERLQQAEQRIQILLQKTEDAPLNDYKGNA.

This sequence belongs to the XseB family. In terms of assembly, heterooligomer composed of large and small subunits.

Its subcellular location is the cytoplasm. It carries out the reaction Exonucleolytic cleavage in either 5'- to 3'- or 3'- to 5'-direction to yield nucleoside 5'-phosphates.. Its function is as follows. Bidirectionally degrades single-stranded DNA into large acid-insoluble oligonucleotides, which are then degraded further into small acid-soluble oligonucleotides. This chain is Exodeoxyribonuclease 7 small subunit, found in Haemophilus influenzae (strain PittGG).